The chain runs to 639 residues: MLNSYSPLQSPSSSITLPPLFHINNNNNNNNNNNNNNGHNNDKQNVNKLGLKLNINGYDSGFSPFSPNHSIANNNNNNNNNNNNNNNNNNNNNNNNNNNNNNNNNNNIQSPKNNNSNNNKLNESCGSLNSSNDNNFNSGNDDNSLKRVRVFSNQNQNQNQNQNQNQNQNQNQNQNQNQNQKDSWNIHFGEIVNIVLELESVLSCKNENINQINQIKSSEKSMRSALYKKEIEILELKDKLNNSSATFNSLKVIQPIKLEKSPRTLNNSSDSISENINNNNNNNNNNNNNNNNNINESNINTSPTHELSGSSGTLGGYSKSHILSILDDLDSESSNISSDSEDDEQPRKVPRDLNYKPNNNINYANNNNNNNNNNNNNNHNNNINNNNNNNNNNNNNSNNYHHSIGSITNSVNIKPSKDQTSNDWAAATEALLNLHTNKNNNNNNNNNNNNNNNYHSNNNNYSNSPNTTPPYQNSNQQFNNNQPQSQQQQQSQQQQQQQQQYQNSINKNITTTTNNNNNNLTSSSNNQAVVYGNTSPNQSSANGNNENVIGVPFTGSIVKRKKRGKLPGEATSILKKWLFEHNMHPYPTEEEKVALANSTFLSFNQINNWFTNARRRILPRQLDRKVFGSPLFSHFSITK.

6 disordered regions span residues 1–45, 66–144, 157–179, 262–313, 331–422, and 436–547; these read MLNS…DKQN, SPNH…DDNS, NQNQ…QNQN, PRTL…SSGT, SESS…QTSN, and TNKN…NNEN. The stretch at 72–109 forms a coiled coil; sequence ANNNNNNNNNNNNNNNNNNNNNNNNNNNNNNNNNNNIQ. Low complexity-rich tracts occupy residues 73–119 and 126–142; these read NNNN…SNNN and GSLN…GNDD. Coiled-coil stretches lie at residues 152 to 184 and 230 to 296; these read SNQN…KDSW and EIEI…NINE. Residues 266–300 show a composition bias toward low complexity; sequence NNSSDSISENINNNNNNNNNNNNNNNNNINESNIN. Residues 345–354 show a composition bias toward basic and acidic residues; sequence QPRKVPRDLN. The span at 358–399 shows a compositional bias: low complexity; the sequence is NNNINYANNNNNNNNNNNNNNHNNNINNNNNNNNNNNNNSNN. A coiled-coil region spans residues 365–396; that stretch reads NNNNNNNNNNNNNNHNNNINNNNNNNNNNNNN. The span at 405 to 422 shows a compositional bias: polar residues; sequence GSITNSVNIKPSKDQTSN. A compositionally biased stretch (low complexity) spans 436 to 526; the sequence is TNKNNNNNNN…NNNLTSSSNN (91 aa). Polar residues predominate over residues 532–547; it reads GNTSPNQSSANGNNEN. The homeobox DNA-binding region spans 559 to 621; the sequence is KRKKRGKLPG…NARRRILPRQ (63 aa).

It is found in the nucleus. Its function is as follows. Putative transcription factor. The chain is Homeobox protein 9 (hbx9) from Dictyostelium discoideum (Social amoeba).